Here is a 409-residue protein sequence, read N- to C-terminus: Nucleoprotein (409 aa).

Disordered regions lie at residues 1 to 32 (MASG…SSGN), 44 to 69 (LNSP…QQHG), 121 to 145 (ADVK…LRFS), 164 to 195 (RSGR…SEGD), and 238 to 259 (VDQV…DKMN). Residues 15–31 (PVIKLGGPKPPKVGSSG) show a composition bias toward low complexity. Residues 29–160 (SSGNASWFQA…GNFRWDFIPL (132 aa)) form an RNA-binding region. One can recognise a CoV N NTD domain in the interval 31–156 (GNASWFQAIK…GGPDGNFRWD (126 aa)). Residues 164-179 (RSGRSTAASSAASSRA) are compositionally biased toward low complexity. Composition is skewed to basic and acidic residues over residues 180 to 192 (PSRD…RSGS) and 247 to 259 (KGKE…DKMN). 2 positions are modified to phosphoserine; by host: Ser190 and Ser192. The 117-residue stretch at 215–331 (TKAKADEMAH…QCVDGVGTRP (117 aa)) folds into the CoV N CTD domain. A dimerization region spans residues 226-333 (RYCKRTIPPG…VDGVGTRPKD (108 aa)). Cys320 and Cys323 are disulfide-bonded. A disordered region spans residues 326–409 (GVGTRPKDDE…GDSALGENEL (84 aa)). The span at 341 to 358 (RSSSRPATRTSSPALRQQ) shows a compositional bias: low complexity. The span at 368-384 (KQDDEVDKALTSDEERN) shows a compositional bias: basic and acidic residues. Thr378 is subject to Phosphothreonine; by host. Ser379 carries the post-translational modification Phosphoserine; by host.

Belongs to the gammacoronavirus nucleocapsid protein family. Homooligomer. Both monomeric and oligomeric forms interact with RNA. Interacts with protein M. Interacts with NSP3; this interaction serves to tether the genome to the newly translated replicase-transcriptase complex at a very early stage of infection. ADP-ribosylated. The ADP-ribosylation is retained in the virion during infection. Post-translationally, phosphorylated on serine and threonine residues.

Its subcellular location is the virion. It localises to the host endoplasmic reticulum-Golgi intermediate compartment. The protein resides in the host Golgi apparatus. Functionally, packages the positive strand viral genome RNA into a helical ribonucleocapsid (RNP) and plays a fundamental role during virion assembly through its interactions with the viral genome and membrane protein M. Plays an important role in enhancing the efficiency of subgenomic viral RNA transcription as well as viral replication. The chain is Nucleoprotein from Gallus gallus (Chicken).